Reading from the N-terminus, the 67-residue chain is uncharacterized protein (67 aa).

Transmembrane regions (helical) follow at residues 8–28 (MWFALGSMGLMFLAVASIYLS) and 41–61 (ISSFAYMCMLISGIIVFVVVF).

It localises to the cell membrane. This is an uncharacterized protein from Bacillus subtilis (strain 168).